Here is a 153-residue protein sequence, read N- to C-terminus: Large ribosomal subunit protein uL30 (153 aa).

Belongs to the universal ribosomal protein uL30 family. In terms of assembly, part of the 50S ribosomal subunit.

This Methanocorpusculum labreanum (strain ATCC 43576 / DSM 4855 / Z) protein is Large ribosomal subunit protein uL30.